Here is a 96-residue protein sequence, read N- to C-terminus: Cell division protein FtsB (96 aa).

Residues 1 to 11 (MDIKSNSFFYI) are Cytoplasmic-facing. The chain crosses the membrane as a helical span at residues 12–29 (FISVVLLLIAILQYDLWF). At 30-96 (SNTGFIKYQA…KQGEVFYSVK (67 aa)) the chain is on the periplasmic side.

Belongs to the FtsB family. In terms of assembly, part of a complex composed of FtsB, FtsL and FtsQ.

It localises to the cell inner membrane. Functionally, essential cell division protein. May link together the upstream cell division proteins, which are predominantly cytoplasmic, with the downstream cell division proteins, which are predominantly periplasmic. The polypeptide is Cell division protein FtsB (Francisella tularensis subsp. tularensis (strain SCHU S4 / Schu 4)).